The sequence spans 203 residues: Small ribosomal subunit protein uS4 (203 aa).

Residues 15–46 form a disordered region; it reads LGENIWGRPKSSVNRRSYGPGQHGQRRKSKVS. Positions 94-154 constitute an S4 RNA-binding domain; it reads QRLDMVVYRA…KKAKEMALIA (61 aa).

The protein belongs to the universal ribosomal protein uS4 family. In terms of assembly, part of the 30S ribosomal subunit. Contacts protein S5. The interaction surface between S4 and S5 is involved in control of translational fidelity.

In terms of biological role, one of the primary rRNA binding proteins, it binds directly to 16S rRNA where it nucleates assembly of the body of the 30S subunit. With S5 and S12 plays an important role in translational accuracy. This chain is Small ribosomal subunit protein uS4, found in Novosphingobium aromaticivorans (strain ATCC 700278 / DSM 12444 / CCUG 56034 / CIP 105152 / NBRC 16084 / F199).